Consider the following 370-residue polypeptide: Flagellar P-ring protein (370 aa).

The signal sequence occupies residues 1–21; the sequence is MRLFSVVLAVFTLLLPSQAFA.

This sequence belongs to the FlgI family. In terms of assembly, the basal body constitutes a major portion of the flagellar organelle and consists of four rings (L,P,S, and M) mounted on a central rod.

The protein localises to the periplasm. Its subcellular location is the bacterial flagellum basal body. Assembles around the rod to form the L-ring and probably protects the motor/basal body from shearing forces during rotation. This Alteromonas mediterranea (strain DSM 17117 / CIP 110805 / LMG 28347 / Deep ecotype) protein is Flagellar P-ring protein.